We begin with the raw amino-acid sequence, 244 residues long: Protein FAM168A (244 aa).

The residue at position 1 (M1) is an N-acetylmethionine. R102 carries the post-translational modification Asymmetric dimethylarginine. Residues 107–126 (TPYKVPPTQSNTAPPPYSPS) are disordered.

Belongs to the FAM168 family. In terms of assembly, interacts with POLB. Interacts with AKT1 and MT1X. May interact with FAM168B.

In cancer context, protects cells from induced-DNA damage and apoptosis. Acts, at least in part, through PI3K/AKT/NFKB signaling pathway and by preventing POLB degradation. Decreases POLB ubiquitation and stabilizes its protein levels. The protein is Protein FAM168A (Fam168a) of Mus musculus (Mouse).